Here is a 132-residue protein sequence, read N- to C-terminus: Small ribosomal subunit protein uS8 (132 aa).

This sequence belongs to the universal ribosomal protein uS8 family. As to quaternary structure, part of the 30S ribosomal subunit. Contacts proteins S5 and S12.

One of the primary rRNA binding proteins, it binds directly to 16S rRNA central domain where it helps coordinate assembly of the platform of the 30S subunit. This Limosilactobacillus fermentum (strain NBRC 3956 / LMG 18251) (Lactobacillus fermentum) protein is Small ribosomal subunit protein uS8.